The chain runs to 177 residues: Ribonuclease alpha-sarcin (177 aa).

A signal peptide spans 1 to 27 (MVAIKNLVLVALTAVTALAVPSPLEAR). Intrachain disulfides connect cysteine 33–cysteine 175 and cysteine 103–cysteine 159. Histidine 77 is an active-site residue. The disordered stretch occupies residues 86–119 (DGKLPKGRTPIKFGKSDCDRPPKHSKDGNGKTDH). A compositionally biased stretch (basic and acidic residues) spans 99 to 119 (GKSDCDRPPKHSKDGNGKTDH). Glutamate 123 serves as the catalytic Proton acceptor. Catalysis depends on histidine 164, which acts as the Proton donor.

This sequence belongs to the ribonuclease U2 family.

The protein resides in the secreted. It catalyses the reaction a 28S rRNA containing guanosine-adenosine pair + H2O = an [RNA fragment]-3'-adenosine-3'-phosphate + a 5'-a hydroxy-guanosine-3'-[RNA fragment].. In terms of biological role, alpha-sarcin is specific for purines in both single- and double-stranded RNA. Its toxic action on eukaryotic cells is the result of cleavage of a single phosphodiester bond in the 60S subunit of ribosomes. Inhibits both the EFl (elongation factor 1)-dependent binding of aminoacyl-tRNA and the GTP-dependent binding of EF2 (elongation factor 2) to ribosomes. The chain is Ribonuclease alpha-sarcin (sar) from Aspergillus giganteus.